The following is a 398-amino-acid chain: Alpha-(1,3)-fucosyltransferase 4 (398 aa).

Topologically, residues 1-15 are cytoplasmic; it reads MRARWGRRGARRGGP. A helical; Signal-anchor for type II membrane protein membrane pass occupies residues 16–40; that stretch reads GLPGTHLALLAASLLSSSVAIYVCW. The Lumenal segment spans residues 41–398; that stretch reads KQLPPLPWAS…VPNLAGWFQQ (358 aa). 3 N-linked (GlcNAc...) asparagine glycosylation sites follow: asparagine 84, asparagine 183, and asparagine 311.

The protein belongs to the glycosyltransferase 10 family.

The protein resides in the golgi apparatus. It localises to the golgi stack membrane. It carries out the reaction a beta-D-galactosyl-(1-&gt;4)-N-acetyl-beta-D-glucosaminyl derivative + GDP-beta-L-fucose = a beta-D-galactosyl-(1-&gt;4)-[alpha-L-fucosyl-(1-&gt;3)]-N-acetyl-beta-D-glucosaminyl derivative + GDP + H(+). The enzyme catalyses an N-acetyl-alpha-neuraminyl-(2-&gt;3)-beta-D-galactosyl-(1-&gt;4)-N-acetyl-beta-D-glucosaminyl derivative + GDP-beta-L-fucose = an alpha-Neu5Ac-(2-&gt;3)-beta-D-Gal-(1-&gt;4)-[alpha-L-Fuc-(1-&gt;3)]-beta-D-GlcNAc derivative + GDP + H(+). It catalyses the reaction an alpha-Neu5Ac-(2-&gt;3)-beta-D-Gal-(1-&gt;4)-beta-D-GlcNAc-(1-&gt;3)-beta-D-Gal-(1-&gt;4)-beta-D-GlcNAc derivative + GDP-beta-L-fucose = an alpha-Neu5Ac-(2-&gt;3)-beta-D-Gal-(1-&gt;4)-beta-D-GlcNAc-(1-&gt;3)-beta-D-Gal-(1-&gt;4)-[alpha-L-Fuc-(1-&gt;3)]-beta-D-GlcNAc derivative + GDP + H(+). The catalysed reaction is an alpha-Neu5Ac-(2-&gt;3)-beta-D-Gal-(1-&gt;4)-beta-D-GlcNAc6S derivative + GDP-beta-L-fucose = an alpha-Neu5Ac-(2-&gt;3)-beta-D-Gal-(1-&gt;4)-[alpha-L-Fuc-(1-&gt;3)]-beta-D-GlcNAc6S derivative + GDP + H(+). Its pathway is protein modification; protein glycosylation. Its function is as follows. Catalyzes alpha(1-&gt;3) linkage of fucosyl moiety transferred from GDP-beta-L-fucose to N-acetyl glucosamine (GlcNAc) within type 2 lactosamine (LacNAc, Gal-beta(1-&gt;4)GlcNAc) glycan attached to N- or O-linked glycoproteins. Robustly fucosylates nonsialylated distal LacNAc unit of the polylactosamine chain to form Lewis X antigen (CD15), a glycan determinant known to mediate important cellular functions in development and immunity. Fucosylates with lower efficiency sialylated LacNAc acceptors to form sialyl Lewis X and 6-sulfo sialyl Lewis X determinants that serve as recognition epitopes for C-type lectins. Together with FUT7 contributes to SELE, SELL and SELP selectin ligand biosynthesis and selectin-dependent lymphocyte homing, leukocyte migration and blood leukocyte homeostasis. In a cell type specific manner, may also fucosylate the internal LacNAc unit of the polylactosamine chain to form VIM-2 antigen that serves as recognition epitope for SELE. The polypeptide is Alpha-(1,3)-fucosyltransferase 4 (FUT4) (Bos taurus (Bovine)).